A 211-amino-acid chain; its full sequence is Small ribosomal subunit protein eS1 (211 aa).

The protein belongs to the eukaryotic ribosomal protein eS1 family.

The protein is Small ribosomal subunit protein eS1 of Methanothrix thermoacetophila (strain DSM 6194 / JCM 14653 / NBRC 101360 / PT) (Methanosaeta thermophila).